Here is a 150-residue protein sequence, read N- to C-terminus: MMVKLLLLFLVCWSALPLESSPLGNRYNLEIGEKQYYISLAKTNWFEASNHCRQNGGFLLNLESREELELLSPHLHPAYSYWLSINDLGERGVYVSEATGLEAPFLNWSAGEPDNSSGYDRCVELWLSTTSFQMNDLPCYSSVAFICQLN.

An N-terminal signal peptide occupies residues 1 to 20 (MMVKLLLLFLVCWSALPLES). The C-type lectin domain maps to 31–148 (IGEKQYYISL…CYSSVAFICQ (118 aa)). 2 disulfides stabilise this stretch: C52–C147 and C122–C139. N-linked (GlcNAc...) asparagine glycosylation is found at N107 and N115.

It localises to the secreted. Its function is as follows. Galactose-specific lectin that displays calcium-dependent activity. Binds to the surface of hemocytes and enhances hemocyte encapsulation and melanization. This is likely by interacting with carbohydrates on the surface of the hemocytes. Also displays agglutination activity against the Gram-negative bacterium E.coli. This is C-type lectin 37Db from Drosophila melanogaster (Fruit fly).